The following is a 206-amino-acid chain: Large ribosomal subunit protein uL4 (206 aa).

Positions 44–77 (RQGTRAQKDRQTVKHSTKKPWRQKGTGRARAGMT) are disordered. Residues 56-70 (VKHSTKKPWRQKGTG) show a composition bias toward basic residues.

The protein belongs to the universal ribosomal protein uL4 family. In terms of assembly, part of the 50S ribosomal subunit.

Functionally, one of the primary rRNA binding proteins, this protein initially binds near the 5'-end of the 23S rRNA. It is important during the early stages of 50S assembly. It makes multiple contacts with different domains of the 23S rRNA in the assembled 50S subunit and ribosome. In terms of biological role, forms part of the polypeptide exit tunnel. This chain is Large ribosomal subunit protein uL4, found in Methylibium petroleiphilum (strain ATCC BAA-1232 / LMG 22953 / PM1).